A 189-amino-acid chain; its full sequence is Elongation factor P (189 aa).

Lysine 34 bears the N6-(3,6-diaminohexanoyl)-5-hydroxylysine mark.

This sequence belongs to the elongation factor P family. In terms of processing, may be beta-lysylated on the epsilon-amino group of Lys-34 by the combined action of EpmA and EpmB, and then hydroxylated on the C5 position of the same residue by EpmC (if this protein is present). Lysylation is critical for the stimulatory effect of EF-P on peptide-bond formation. The lysylation moiety may extend toward the peptidyltransferase center and stabilize the terminal 3-CCA end of the tRNA. Hydroxylation of the C5 position on Lys-34 may allow additional potential stabilizing hydrogen-bond interactions with the P-tRNA.

The protein resides in the cytoplasm. It functions in the pathway protein biosynthesis; polypeptide chain elongation. Its function is as follows. Involved in peptide bond synthesis. Alleviates ribosome stalling that occurs when 3 or more consecutive Pro residues or the sequence PPG is present in a protein, possibly by augmenting the peptidyl transferase activity of the ribosome. Modification of Lys-34 is required for alleviation. The protein is Elongation factor P of Acinetobacter baumannii (strain AB307-0294).